We begin with the raw amino-acid sequence, 362 residues long: 3-dehydroquinate synthase (362 aa).

NAD(+)-binding positions include 71–76 (DGERYK), 105–109 (GVIGD), 129–130 (TT), Lys-142, Lys-151, and 169–172 (CLKT). Zn(2+)-binding residues include Glu-184, His-247, and His-264.

The protein belongs to the sugar phosphate cyclases superfamily. Dehydroquinate synthase family. Co(2+) is required as a cofactor. The cofactor is Zn(2+). NAD(+) serves as cofactor.

Its subcellular location is the cytoplasm. It carries out the reaction 7-phospho-2-dehydro-3-deoxy-D-arabino-heptonate = 3-dehydroquinate + phosphate. It participates in metabolic intermediate biosynthesis; chorismate biosynthesis; chorismate from D-erythrose 4-phosphate and phosphoenolpyruvate: step 2/7. Catalyzes the conversion of 3-deoxy-D-arabino-heptulosonate 7-phosphate (DAHP) to dehydroquinate (DHQ). In Salmonella arizonae (strain ATCC BAA-731 / CDC346-86 / RSK2980), this protein is 3-dehydroquinate synthase.